We begin with the raw amino-acid sequence, 1132 residues long: Tyrosine-protein kinase JAK2 (1132 aa).

The segment at 1–239 (MGMACLTMTE…RYRFRRFIQQ (239 aa)) is interaction with cytokine/interferon/growth hormone receptors. The FERM domain occupies 37 to 380 (PVLQVYLYHS…GYYRLTADAH (344 aa)). Residue Tyr-119 is modified to Phosphotyrosine; by autocatalysis. 2 positions are modified to phosphotyrosine: Tyr-372 and Tyr-373. One can recognise an SH2; atypical domain in the interval 401–482 (HGPISMDFAI…SLKDLLNCYQ (82 aa)). A Phosphoserine modification is found at Ser-523. A Protein kinase 1 domain is found at 545–809 (LIFNESLGQG…AVIRDLNSLF (265 aa)). 2 positions are modified to phosphotyrosine: Tyr-570 and Tyr-813. The Protein kinase 2 domain maps to 849–1126 (LKFLQQLGKG…RDLSLRVDQI (278 aa)). 855–863 (LGKGNFGSV) provides a ligand contact to ATP. The residue at position 868 (Tyr-868) is a Phosphotyrosine; by autocatalysis. Lys-882 contacts ATP. Phosphotyrosine; by autocatalysis occurs at positions 966 and 972. Asp-976 acts as the Proton acceptor in catalysis. Tyr-1007 and Tyr-1008 each carry phosphotyrosine; by autocatalysis.

This sequence belongs to the protein kinase superfamily. Tyr protein kinase family. JAK subfamily. In terms of assembly, interacts with IL23R, SKB1 and STAM2. Interacts with EPOR. Interacts with LYN. Interacts with SIRPA. Interacts with SH2B1. Interacts with TEC. Interacts with IFNGR2 (via intracellular domain). Interacts with LEPR (Isoform B). Interacts with HSP90AB1; promotes functional activation in a heat shock-dependent manner. Interacts with STRA6. Interacts with ASB2; the interaction targets JAK2 for Notch-induced proteasomal degradation. It depends on Mg(2+) as a cofactor. Post-translationally, autophosphorylated, leading to regulate its activity. Leptin promotes phosphorylation on tyrosine residues, including phosphorylation on Tyr-813. Autophosphorylation on Tyr-119 in response to EPO down-regulates its kinase activity. Autophosphorylation on Tyr-868, Tyr-966 and Tyr-972 in response to growth hormone (GH) are required for maximal kinase activity. Also phosphorylated by TEC. Phosphorylated on tyrosine residues in response to interferon gamma signaling. Phosphorylated on tyrosine residues in response to a signaling cascade that is activated by increased cellular retinol. Undergoes Notch-induced ubiquitination and subsequent proteasomal degradation which is mediated by ASB1 or ASB2, the substrate-recognition components of probable ECS E3 ubiquitin-protein ligase complexes. In terms of tissue distribution, ubiquitously expressed throughout most tissues.

Its subcellular location is the endomembrane system. It localises to the cytoplasm. It is found in the nucleus. The catalysed reaction is L-tyrosyl-[protein] + ATP = O-phospho-L-tyrosyl-[protein] + ADP + H(+). With respect to regulation, regulated by autophosphorylation, can both activate or decrease activity. Heme regulates its activity by enhancing the phosphorylation on Tyr-1007 and Tyr-1008. In terms of biological role, non-receptor tyrosine kinase involved in various processes such as cell growth, development, differentiation or histone modifications. Mediates essential signaling events in both innate and adaptive immunity. In the cytoplasm, plays a pivotal role in signal transduction via its association with type I receptors such as growth hormone (GHR), prolactin (PRLR), leptin (LEPR), erythropoietin (EPOR), thrombopoietin (THPO); or type II receptors including IFN-alpha, IFN-beta, IFN-gamma and multiple interleukins. Following ligand-binding to cell surface receptors, phosphorylates specific tyrosine residues on the cytoplasmic tails of the receptor, creating docking sites for STATs proteins. Subsequently, phosphorylates the STATs proteins once they are recruited to the receptor. Phosphorylated STATs then form homodimer or heterodimers and translocate to the nucleus to activate gene transcription. For example, cell stimulation with erythropoietin (EPO) during erythropoiesis leads to JAK2 autophosphorylation, activation, and its association with erythropoietin receptor (EPOR) that becomes phosphorylated in its cytoplasmic domain. Then, STAT5 (STAT5A or STAT5B) is recruited, phosphorylated and activated by JAK2. Once activated, dimerized STAT5 translocates into the nucleus and promotes the transcription of several essential genes involved in the modulation of erythropoiesis. Part of a signaling cascade that is activated by increased cellular retinol and that leads to the activation of STAT5 (STAT5A or STAT5B). In addition, JAK2 mediates angiotensin-2-induced ARHGEF1 phosphorylation. Plays a role in cell cycle by phosphorylating CDKN1B. Cooperates with TEC through reciprocal phosphorylation to mediate cytokine-driven activation of FOS transcription. In the nucleus, plays a key role in chromatin by specifically mediating phosphorylation of 'Tyr-41' of histone H3 (H3Y41ph), a specific tag that promotes exclusion of CBX5 (HP1 alpha) from chromatin. Up-regulates the potassium voltage-gated channel activity of KCNA3. This chain is Tyrosine-protein kinase JAK2, found in Rattus norvegicus (Rat).